The sequence spans 188 residues: Hypoxanthine/guanine phosphoribosyltransferase (188 aa).

It belongs to the purine/pyrimidine phosphoribosyltransferase family. Archaeal HPRT subfamily. As to quaternary structure, homodimer.

It is found in the cytoplasm. The catalysed reaction is IMP + diphosphate = hypoxanthine + 5-phospho-alpha-D-ribose 1-diphosphate. It catalyses the reaction GMP + diphosphate = guanine + 5-phospho-alpha-D-ribose 1-diphosphate. Its pathway is purine metabolism; IMP biosynthesis via salvage pathway; IMP from hypoxanthine: step 1/1. In terms of biological role, catalyzes a salvage reaction resulting in the formation of IMP that is energically less costly than de novo synthesis. The sequence is that of Hypoxanthine/guanine phosphoribosyltransferase from Methanobrevibacter ruminantium (strain ATCC 35063 / DSM 1093 / JCM 13430 / OCM 146 / M1) (Methanobacterium ruminantium).